The sequence spans 302 residues: uncharacterized protein (302 aa).

An N-terminal signal peptide occupies residues 1-22; sequence MLVVFKRLGFIVSIFSLTFLSA. A lipid anchor (N-palmitoyl cysteine) is attached at Cys23. Cys23 carries S-diacylglycerol cysteine lipidation.

It belongs to the MG067/MG068/MG395 family.

Its subcellular location is the cell membrane. This is an uncharacterized protein from Mycoplasma pneumoniae (strain ATCC 29342 / M129 / Subtype 1) (Mycoplasmoides pneumoniae).